Consider the following 131-residue polypeptide: Small ribosomal subunit protein uS11 (131 aa).

This sequence belongs to the universal ribosomal protein uS11 family. As to quaternary structure, part of the 30S ribosomal subunit. Interacts with proteins S7 and S18. Binds to IF-3.

Its function is as follows. Located on the platform of the 30S subunit, it bridges several disparate RNA helices of the 16S rRNA. Forms part of the Shine-Dalgarno cleft in the 70S ribosome. The polypeptide is Small ribosomal subunit protein uS11 (Deinococcus radiodurans (strain ATCC 13939 / DSM 20539 / JCM 16871 / CCUG 27074 / LMG 4051 / NBRC 15346 / NCIMB 9279 / VKM B-1422 / R1)).